A 310-amino-acid polypeptide reads, in one-letter code: Cysteine synthase (310 aa).

K46 carries the post-translational modification N6-(pyridoxal phosphate)lysine. Residues N76, 180-184 (GTGGT), and S268 contribute to the pyridoxal 5'-phosphate site.

This sequence belongs to the cysteine synthase/cystathionine beta-synthase family. Homodimer. It depends on pyridoxal 5'-phosphate as a cofactor.

The enzyme catalyses O-acetyl-L-serine + hydrogen sulfide = L-cysteine + acetate. It functions in the pathway amino-acid biosynthesis; L-cysteine biosynthesis; L-cysteine from L-serine: step 2/2. This Staphylococcus epidermidis (strain ATCC 35984 / DSM 28319 / BCRC 17069 / CCUG 31568 / BM 3577 / RP62A) protein is Cysteine synthase (cysK).